Reading from the N-terminus, the 491-residue chain is UDP-N-acetylmuramate--L-alanine ligase (491 aa).

126–132 provides a ligand contact to ATP; that stretch reads GTHGKTT.

It belongs to the MurCDEF family.

The protein resides in the cytoplasm. The catalysed reaction is UDP-N-acetyl-alpha-D-muramate + L-alanine + ATP = UDP-N-acetyl-alpha-D-muramoyl-L-alanine + ADP + phosphate + H(+). Its pathway is cell wall biogenesis; peptidoglycan biosynthesis. Functionally, cell wall formation. The sequence is that of UDP-N-acetylmuramate--L-alanine ligase from Shigella dysenteriae serotype 1 (strain Sd197).